The primary structure comprises 237 residues: 6-carboxyhexanoate--CoA ligase (237 aa).

This sequence belongs to the BioW family. Homodimer. It depends on Mg(2+) as a cofactor.

It catalyses the reaction heptanedioate + ATP + CoA = 6-carboxyhexanoyl-CoA + AMP + diphosphate. It participates in metabolic intermediate metabolism; pimeloyl-CoA biosynthesis; pimeloyl-CoA from pimelate: step 1/1. Its function is as follows. Catalyzes the transformation of pimelate into pimeloyl-CoA with concomitant hydrolysis of ATP to AMP. The sequence is that of 6-carboxyhexanoate--CoA ligase from Methanocaldococcus jannaschii (strain ATCC 43067 / DSM 2661 / JAL-1 / JCM 10045 / NBRC 100440) (Methanococcus jannaschii).